Consider the following 966-residue polypeptide: Mitogen-activated protein kinase kinase kinase 13 (966 aa).

The disordered stretch occupies residues 1 to 59; the sequence is MANPQEHLSCSSSPRLPLSENKTFNGLQDDLAPMGSHASPKLLKDQQEKGMVQTELAEG. Low complexity predominate over residues 8 to 19; the sequence is LSCSSSPRLPLS. The 242-residue stretch at 168 to 409 folds into the Protein kinase domain; that stretch reads ISELQWLGSG…FRQTLMHLDI (242 aa). ATP is bound by residues 174 to 182 and lysine 195; that span reads LGSGAQGAV. Residue aspartate 279 is the Proton acceptor of the active site. Leucine-zipper regions lie at residues 433–454 and 486–507; these read VKKH…DEEL and LSAI…EQAV. Residues 457 to 496 are a coiled coil; sequence RRREELRHALDIREHYERKLERANNLYMELSAIMLQLEMR. Disordered stretches follow at residues 561–663, 743–874, and 937–966; these read EVAP…GQDI, LDVP…DELA, and QFEE…SATW. Residues 567–581 are compositionally biased toward low complexity; that stretch reads SPLSGSPKLSSSSSK. A compositionally biased stretch (basic residues) spans 582-594; that stretch reads SRYRSKPRHRRGN. Residues 609–622 show a composition bias toward polar residues; it reads QPAQEDSPHPTSLH. A compositionally biased stretch (low complexity) spans 629-642; sequence PSSQHHNLLQQQYQ. Positions 814 to 827 are enriched in acidic residues; sequence DSSEEEEGEVDSEV. The tract at residues 815-828 is acidic; that stretch reads SSEEEEGEVDSEVE. Positions 840-855 are enriched in polar residues; that stretch reads SSCQSYSTFSSENFSV. Positions 939–950 are enriched in acidic residues; sequence EESDCDSSDGEC. Polar residues predominate over residues 954–966; sequence TVRTNKHYSSATW.

The protein belongs to the protein kinase superfamily. Ser/Thr protein kinase family. As to quaternary structure, homodimer; forms dimers through the leucine-zipper motif. Interacts with the C-terminus of MAPK8IP1 through the kinase catalytic domain. Binds PRDX3. Associates with the IKK complex through the kinase domain. Requires Mg(2+) as cofactor. Autophosphorylated on serine and threonine residues.

The protein resides in the cytoplasm. It is found in the membrane. It catalyses the reaction L-seryl-[protein] + ATP = O-phospho-L-seryl-[protein] + ADP + H(+). It carries out the reaction L-threonyl-[protein] + ATP = O-phospho-L-threonyl-[protein] + ADP + H(+). Its activity is regulated as follows. Activated by autophosphorylation and homodimerization. Functionally, activates the JUN N-terminal pathway through activation of the MAP kinase kinase MAP2K7. Acts synergistically with PRDX3 to regulate the activation of NF-kappa-B in the cytosol. This activation is kinase-dependent and involves activating the IKK complex, the IKBKB-containing complex that phosphorylates inhibitors of NF-kappa-B. In Bos taurus (Bovine), this protein is Mitogen-activated protein kinase kinase kinase 13 (MAP3K13).